A 776-amino-acid polypeptide reads, in one-letter code: Genome polyprotein (776 aa).

The interval 1–27 (MAGKAVLKGKGGGPPRRASKVAPKKTR) is disordered. The Cytoplasmic segment spans residues 1-98 (MAGKAVLKGK…LHRRGSRRTT (98 aa)). Over residues 17-27 (RASKVAPKKTR) the composition is skewed to basic residues. A hydrophobic; homodimerization of capsid protein C region spans residues 33–68 (MPNGLVLMRMLGVLWHALTGTARSPVLKAFWKVVPL). The propeptide at 97-117 (TTIDWMTPLLITVMLGMCLTA) is ER anchor for the protein C, removed in mature form by serine protease NS3. Residues 99-117 (IDWMTPLLITVMLGMCLTA) traverse the membrane as a helical segment. Residues 118-242 (TVRRERDGSM…HLTRVEGWVW (125 aa)) lie on the Extracellular side of the membrane. An N-linked (GlcNAc...) asparagine; by host glycan is attached at Asn-144. A helical membrane pass occupies residues 243 to 260 (KNKLFTLSLVMVAWLMVD). Position 261 (Gly-261) is a topological domain, cytoplasmic. A helical membrane pass occupies residues 262-280 (LLPRILIVVVALALVPAYA). Residues 281–727 (SRCTHLENRD…HTVLGGAFNT (447 aa)) are Extracellular-facing. 4 cysteine pairs are disulfide-bonded: Cys-283–Cys-310, Cys-340–Cys-396, Cys-354–Cys-385, and Cys-372–Cys-401. A glycan (N-linked (GlcNAc...) asparagine; by host) is linked at Asn-434. Intrachain disulfides connect Cys-466–Cys-570 and Cys-587–Cys-618. Residues 728–748 (LLGGVGFLPKILLGVAMAWLG) constitute an intramembrane region (helical). Over 749–755 (LNMRNPT) the chain is Extracellular. Positions 756-776 (LSMGFLLSGGLVLAMTLGVGA) form an intramembrane region, helical.

In terms of processing, specific enzymatic cleavages in vivo yield mature proteins Peptide 2K acts as a signal sequence and is removed from the N-terminus of NS4B by the host signal peptidase in the ER lumen. Signal cleavage at the 2K-4B site requires a prior NS3 protease-mediated cleavage at the 4A-2K site.

It localises to the virion. Its subcellular location is the secreted. It is found in the virion membrane. The protein localises to the host endoplasmic reticulum membrane. In terms of biological role, capsid protein C self-assembles to form an icosahedral capsid about 30 nm in diameter. The capsid encapsulates the genomic RNA. Its function is as follows. prM acts as a chaperone for envelope protein E during intracellular virion assembly by masking and inactivating envelope protein E fusion peptide. prM is matured in the last step of virion assembly, presumably to avoid catastrophic activation of the viral fusion peptide induced by the acidic pH of the trans-Golgi network. After cleavage by host furin, the pr peptide is released in the extracellular medium and small envelope protein M and envelope protein E homodimers are dissociated. Functionally, envelope protein E binding to host cell surface receptor is followed by virus internalization through clathrin-mediated endocytosis. Envelope protein E is subsequently involved in membrane fusion between virion and host late endosomes. Synthesized as a homodimer with prM which acts as a chaperone for envelope protein E. After cleavage of prM, envelope protein E dissociate from small envelope protein M and homodimerizes. In Homo sapiens (Human), this protein is Genome polyprotein.